A 323-amino-acid chain; its full sequence is COP9 signalosome complex subunit 6 (323 aa).

The MPN domain maps to 37-170 (VALHPLVILN…VSVFESVIDI (134 aa)).

This sequence belongs to the peptidase M67A family. CSN6 subfamily. In terms of assembly, component of the CSN complex, composed of COPS1/GPS1, COPS2, COPS3, COPS4, COPS5, COPS6, COPS7 (COPS7A or COPS7B), COPS8 and COPS9. In the complex, it probably interacts directly with COPS2, COPS4, COPS5, COPS7 (COPS7A or COPS7B) and COPS9. Interacts with the translation initiation factor EIF3S6. Interacts weakly with RBX1. Directly interacts with COP1 and 14-3-3 protein sigma/SFN. Interacts with ERCC6.

It is found in the cytoplasm. The protein resides in the nucleus. Component of the COP9 signalosome complex (CSN), a complex involved in various cellular and developmental processes. The CSN complex is an essential regulator of the ubiquitin (Ubl) conjugation pathway by mediating the deneddylation of the cullin subunits of SCF-type E3 ligase complexes, leading to decrease the Ubl ligase activity of SCF-type complexes such as SCF, CSA or DDB2. The complex is also involved in phosphorylation of p53/TP53, c-jun/JUN, IkappaBalpha/NFKBIA, ITPK1 and IRF8, possibly via its association with CK2 and PKD kinases. CSN-dependent phosphorylation of TP53 and JUN promotes and protects degradation by the Ubl system, respectively. Has some glucocorticoid receptor-responsive activity. Stabilizes COP1 through reducing COP1 auto-ubiquitination and decelerating COP1 turnover rate, hence regulates the ubiquitination of COP1 targets, including SFN. The chain is COP9 signalosome complex subunit 6 (COPS6) from Sus scrofa (Pig).